Reading from the N-terminus, the 218-residue chain is Probable septum site-determining protein MinC (218 aa).

Belongs to the MinC family. Interacts with MinD and FtsZ.

Functionally, cell division inhibitor that blocks the formation of polar Z ring septums. Rapidly oscillates between the poles of the cell to destabilize FtsZ filaments that have formed before they mature into polar Z rings. Prevents FtsZ polymerization. In Kosmotoga olearia (strain ATCC BAA-1733 / DSM 21960 / TBF 19.5.1), this protein is Probable septum site-determining protein MinC.